A 149-amino-acid chain; its full sequence is Probable flagellum biosynthesis repressor protein FlbT (149 aa).

It belongs to the FlbT family.

Has a post-transcriptional repressor function in flagellum biogenesis. Associates with the 5'-UTR of fljK mRNA and promotes its degradation. The sequence is that of Probable flagellum biosynthesis repressor protein FlbT from Rhizobium etli (strain ATCC 51251 / DSM 11541 / JCM 21823 / NBRC 15573 / CFN 42).